The sequence spans 362 residues: MKRQLILEDGSVFVGKGFGSDREMSGEVVFNTGMTGYQEMLSDPSYCGQIVTLTYPLIGNYGINRDDFESMNPAIHGLIVKEACDIPSNWRSEESLDSLLKAKQIPGLSGIDTRKLTRLIRMHGTLKGQLCPLDVDVEQIVQELKATPTPTDQVSRVSTRDPYHVPGPGKRVVLVDYGMKHNILQELIRRNCEVFVVPYHTSAEEVLRLGPDGVLLSNGPGNPEDVSEGVEMIRNLLGKVPLFGICLGHQLFALACGAKTEKLRFGHRGSNHPVRERSTGLIEITAQNHGYTVTEGSLVNTDLIVTHEAVNDGTIEGLAHKVHPAFSVQYHPEASPGPEDSNVLFDRFIKLMESNKHRALTV.

The CPSase stretch occupies residues 1–168 (MKRQLILEDG…TRDPYHVPGP (168 aa)). Ser-45, Gly-219, and Gly-221 together coordinate L-glutamine. One can recognise a Glutamine amidotransferase type-1 domain in the interval 171–358 (RVVLVDYGMK…IKLMESNKHR (188 aa)). The active-site Nucleophile is the Cys-246. Residues Leu-247, Gln-250, Asn-288, Gly-290, and Tyr-291 each contribute to the L-glutamine site. Active-site residues include His-331 and Glu-333.

The protein belongs to the CarA family. In terms of assembly, composed of two chains; the small (or glutamine) chain promotes the hydrolysis of glutamine to ammonia, which is used by the large (or ammonia) chain to synthesize carbamoyl phosphate. Tetramer of heterodimers (alpha,beta)4.

It catalyses the reaction hydrogencarbonate + L-glutamine + 2 ATP + H2O = carbamoyl phosphate + L-glutamate + 2 ADP + phosphate + 2 H(+). The catalysed reaction is L-glutamine + H2O = L-glutamate + NH4(+). The protein operates within pyrimidine metabolism; UMP biosynthesis via de novo pathway; (S)-dihydroorotate from bicarbonate: step 1/3. Its function is as follows. Small subunit of the glutamine-dependent carbamoyl phosphate synthetase (CPSase). CPSase catalyzes the formation of carbamoyl phosphate from the ammonia moiety of glutamine, carbonate, and phosphate donated by ATP, constituting the first step of the biosynthetic pathway leading to pyrimidine nucleotides. The small subunit (glutamine amidotransferase) binds and cleaves glutamine to supply the large subunit with the substrate ammonia. The chain is Carbamoyl phosphate synthase pyrimidine-specific small chain from Halalkalibacterium halodurans (strain ATCC BAA-125 / DSM 18197 / FERM 7344 / JCM 9153 / C-125) (Bacillus halodurans).